Reading from the N-terminus, the 499-residue chain is MSLSLYDSAHSLDGKSGWDTPVFSMKDSMDRNPMVTEAWEALCQSQVYFRGKPVGTIAAYDHASEEVLNYDQVFVRDFVPSALAFLMNGEPEIVKNFLLKTLHIQGQDKMIDKFKLGDGAMPASFKVLHNPIKKTDTIIADFGESAIGRVAPVDSGFWWIILLRAYTKSTGDHSLAERPECQKGMRLILSLCLSEGFDTFPTLLCADGCSMVDRRMGIYGYPIEIQALFFMALRSALSMLKHDSEGKEFMEKIVKRLHALSFHMRSYFWLDFQQLNDIYRYKTEEYSHTAVNKFNVIPDSIPDWIFDFMPLRGGYFVGNVSPARMDFRWFALGNCIAILSSLATPEQSMAIMDLIEARWEELVGEMPLKICYPAMESHEWGIVTGCDPKNTRWSYHNGGSWPVLLWLLTAASIKTGRPQIARRAIELAEARLLKDGWPEYYDGKSGRFIGKQARKSQTWSIAGYLVAKMMMDDPTHVGMISMEEEKHMKPPLRRSSSWT.

S11 bears the Phosphoserine mark. Phosphothreonine is present on T20. Position 497 is a phosphoserine (S497).

It belongs to the glycosyl hydrolase 100 family.

It catalyses the reaction Hydrolysis of terminal non-reducing beta-D-fructofuranoside residues in beta-D-fructofuranosides.. Invertase that cleaves sucrose into glucose and fructose. This is Probable alkaline/neutral invertase F from Arabidopsis thaliana (Mouse-ear cress).